The primary structure comprises 186 residues: Ribosome-recycling factor (186 aa).

Belongs to the RRF family.

Its subcellular location is the cytoplasm. Its function is as follows. Responsible for the release of ribosomes from messenger RNA at the termination of protein biosynthesis. May increase the efficiency of translation by recycling ribosomes from one round of translation to another. This is Ribosome-recycling factor from Paraburkholderia phymatum (strain DSM 17167 / CIP 108236 / LMG 21445 / STM815) (Burkholderia phymatum).